Reading from the N-terminus, the 192-residue chain is Adenine phosphoribosyltransferase (192 aa).

The protein belongs to the purine/pyrimidine phosphoribosyltransferase family. In terms of assembly, homodimer.

It localises to the cytoplasm. The enzyme catalyses AMP + diphosphate = 5-phospho-alpha-D-ribose 1-diphosphate + adenine. It functions in the pathway purine metabolism; AMP biosynthesis via salvage pathway; AMP from adenine: step 1/1. Functionally, catalyzes a salvage reaction resulting in the formation of AMP, that is energically less costly than de novo synthesis. This is Adenine phosphoribosyltransferase from Corynebacterium efficiens (strain DSM 44549 / YS-314 / AJ 12310 / JCM 11189 / NBRC 100395).